Here is an 892-residue protein sequence, read N- to C-terminus: Alanine--tRNA ligase (892 aa).

Residues histidine 565, histidine 569, cysteine 675, and histidine 679 each coordinate Zn(2+). A disordered region spans residues 852–871 (MGGKGGGGRPDMAQAGGPEA).

Belongs to the class-II aminoacyl-tRNA synthetase family. Requires Zn(2+) as cofactor.

It localises to the cytoplasm. The catalysed reaction is tRNA(Ala) + L-alanine + ATP = L-alanyl-tRNA(Ala) + AMP + diphosphate. Its function is as follows. Catalyzes the attachment of alanine to tRNA(Ala) in a two-step reaction: alanine is first activated by ATP to form Ala-AMP and then transferred to the acceptor end of tRNA(Ala). Also edits incorrectly charged Ser-tRNA(Ala) and Gly-tRNA(Ala) via its editing domain. This chain is Alanine--tRNA ligase, found in Parvibaculum lavamentivorans (strain DS-1 / DSM 13023 / NCIMB 13966).